A 222-amino-acid chain; its full sequence is Glutathione S-transferase A4 (222 aa).

Methionine 1 is subject to N-acetylmethionine. The GST N-terminal domain occupies 3 to 83 (TKPKLHYPNG…YIADKHHLFG (81 aa)). Glutathione is bound by residues tyrosine 9, 54 to 55 (QV), and 67 to 68 (QT). One can recognise a GST C-terminal domain in the interval 85 to 208 (DLKERTLIDM…EPGSKKKPPP (124 aa)).

The protein belongs to the GST superfamily. Alpha family. In terms of assembly, homodimer.

It is found in the cytoplasm. It carries out the reaction RX + glutathione = an S-substituted glutathione + a halide anion + H(+). In terms of biological role, conjugation of reduced glutathione to a wide number of exogenous and endogenous hydrophobic electrophiles. This Bos taurus (Bovine) protein is Glutathione S-transferase A4 (GSTA4).